The following is a 938-amino-acid chain: Glutamate receptor ionotropic, NMDA 1 (938 aa).

An N-terminal signal peptide occupies residues 1-18 (MSTMHLLTFALLFSCSFA). The Extracellular portion of the chain corresponds to 19–559 (RAACDPKIVN…TLDSFMQPFQ (541 aa)). N61, N203, N239, N276, N300, N350, N368, N440, N471, and N491 each carry an N-linked (GlcNAc...) asparagine glycan. Cysteines 79 and 308 form a disulfide. Cystine bridges form between C420–C454 and C436–C455. Positions 516, 518, and 523 each coordinate glycine. The helical transmembrane segment at 560 to 580 (STLWLLVGLSVHVVAVMLYLL) threads the bilayer. Over 581–602 (DRFSPFGRFKVNSEEEEEDALT) the chain is Cytoplasmic. An intramembrane region (discontinuously helical) is located at residues 603–624 (LSSAMWFSWGVLLNSGIGEGAP). Positions 603-624 (LSSAMWFSWGVLLNSGIGEGAP) are pore-forming. The Cytoplasmic portion of the chain corresponds to 625-630 (RSFSAR). A helical membrane pass occupies residues 631-647 (ILGMVWAGFAMIIVASY). Over 648–812 (TANLAAFLVL…NAPATLTFEN (165 aa)) the chain is Extracellular. N-linked (GlcNAc...) asparagine glycosylation is present at N674. Glycine is bound by residues S688 and D732. An intrachain disulfide couples C744 to C798. Residue N771 is glycosylated (N-linked (GlcNAc...) asparagine). Residues 813–833 (MAGVFMLVAGGIVAGIFLIFI) form a helical membrane-spanning segment. The Cytoplasmic portion of the chain corresponds to 834 to 938 (EIAYKRHKDA…LQLCSRHRES (105 aa)). S889 is modified (phosphoserine; by PKC). Residues 889-938 (SSFKRRRSSKDTSTGGGRGALQNQKDTVLPRRAIEREEGQLQLCSRHRES) form a disordered region. Position 890 is a phosphoserine (S890). S896 and S897 each carry phosphoserine; by PKC. Positions 916–927 (VLPRRAIEREEG) are enriched in basic and acidic residues.

This sequence belongs to the glutamate-gated ion channel (TC 1.A.10.1) family. NR1/GRIN1 subfamily. Heterotetramer; the NMDAR subunits are modular and harbor tiered domains that function in concert to regulate opening and closing of the cation-selective ion channel pore. Forms heterotetrameric channels composed of two GluN1/zeta subunits (GRIN1), and two identical GluN2/epsilon subunits (GRIN2A, GRIN2B, GRIN2C or GRIN2D) or GluN3 subunits (GRIN3A or GRIN3B) (in vitro). Can also form heterotetrameric channels that contain at least two GluN1 subunits and at least two different GluN2 subunits (or a combination of one GluN2 and one GluN3 subunits) (in vitro). In vivo, the subunit composition may vary in function of the expression levels of the different subunits. Found in a complex with GRIN2A or GRIN2B, GRIN3A and PPP2CB. Found in a complex with GRIN2A or GRIN2B and GRIN3B. Interacts with SNX27 (via PDZ domain); the interaction is required for recycling to the plasma membrane when endocytosed and prevent degradation in lysosomes. Interacts with DLG4 and MPDZ. Interacts with LRFN1 and LRFN2. Interacts with MYZAP. Found in a complex with DLG4 and PRR7. Found in a complex with GRIN2B and PRR7. Interacts with PRR7; the interaction is reduced following NMDA receptor activity. NMDA is probably regulated by C-terminal phosphorylation of an isoform of GRIN1 by PKC. Dephosphorylated on Ser-897 probably by protein phosphatase 2A (PPP2CB). Its phosphorylated state is influenced by the formation of the NMDAR-PPP2CB complex and the NMDAR channel activity. In terms of tissue distribution, detected in brain (at protein level). Detected in brain.

It is found in the cell membrane. Its subcellular location is the postsynaptic cell membrane. The protein resides in the postsynaptic density membrane. The protein localises to the synaptic cell membrane. The enzyme catalyses Ca(2+)(in) = Ca(2+)(out). It carries out the reaction Na(+)(in) = Na(+)(out). The catalysed reaction is K(+)(in) = K(+)(out). Functionally, component of N-methyl-D-aspartate (NMDA) receptors (NMDARs) that function as heterotetrameric, ligand-gated cation channels with high calcium permeability and voltage-dependent block by Mg(2+). NMDARs participate in synaptic plasticity for learning and memory formation by contributing to the long-term potentiation (LTP). Channel activation requires binding of the neurotransmitter L-glutamate to the GluN2 subunit, glycine or D-serine binding to the GluN1 subunit, plus membrane depolarization to eliminate channel inhibition by Mg(2+). NMDARs mediate simultaneously the potasium efflux and the influx of calcium and sodium. Each GluN2 or GluN3 subunit confers differential attributes to channel properties, including activation, deactivation and desensitization kinetics, pH sensitivity, Ca2(+) permeability, and binding to allosteric modulators. This is Glutamate receptor ionotropic, NMDA 1 from Mus musculus (Mouse).